We begin with the raw amino-acid sequence, 509 residues long: MNEKQKQESGQVNPADKTSEKDYSKYFEAVYIPPSLKDAKKRGKESVQYHNDFKISEEFKGLGEGRKFYIRTYGCQMNEHDTEVMAGIFMALGYEATNSVDDANVILLNTCAIRENAENKVFGELGHLKALKKNNPDLILGVCGCMSQEESVVNRILKKHPFVDMIFGTHNIHRLPELLSEAYLSKEMVIEVWSKEGDVIENLPKVRNGKIKGWVNIMYGCDKFCTYCIVPYTRGKERSRRPEEIIQEVRRLASEGYKEITLLGQNVNAYGKDFEDMTYGLGDLMDELRKIDIPRIRFTTSHPRDFDDHLIEVLAKGGNLLDHIHLPVQSGSSAMLKMMARKYDRERYLELVGKIKAAMPNASLTTDIIVGFPNETDEQFEETLSLYREVEFDSAYTFIYSPREGTPAAKMKDNVPMRVKKERLQRLNDLVKEISAKKMKEYEGRTVEVLVEGESKNNPDILAGYTEKSKLVNFKGPKDAIGKIVRVKIEQAKTWSLDGVMAGEAIEVK.

Residues 1-20 (MNEKQKQESGQVNPADKTSE) form a disordered region. The region spanning 66–184 (RKFYIRTYGC…LPELLSEAYL (119 aa)) is the MTTase N-terminal domain. Residues cysteine 75, cysteine 111, cysteine 145, cysteine 221, cysteine 225, and cysteine 228 each contribute to the [4Fe-4S] cluster site. Residues 207 to 437 (RNGKIKGWVN…NDLVKEISAK (231 aa)) form the Radical SAM core domain. In terms of domain architecture, TRAM spans 440 to 503 (KEYEGRTVEV…TWSLDGVMAG (64 aa)).

It belongs to the methylthiotransferase family. MiaB subfamily. As to quaternary structure, monomer. The cofactor is [4Fe-4S] cluster.

Its subcellular location is the cytoplasm. The catalysed reaction is N(6)-dimethylallyladenosine(37) in tRNA + (sulfur carrier)-SH + AH2 + 2 S-adenosyl-L-methionine = 2-methylsulfanyl-N(6)-dimethylallyladenosine(37) in tRNA + (sulfur carrier)-H + 5'-deoxyadenosine + L-methionine + A + S-adenosyl-L-homocysteine + 2 H(+). Its function is as follows. Catalyzes the methylthiolation of N6-(dimethylallyl)adenosine (i(6)A), leading to the formation of 2-methylthio-N6-(dimethylallyl)adenosine (ms(2)i(6)A) at position 37 in tRNAs that read codons beginning with uridine. The polypeptide is tRNA-2-methylthio-N(6)-dimethylallyladenosine synthase (Bacillus velezensis (strain DSM 23117 / BGSC 10A6 / LMG 26770 / FZB42) (Bacillus amyloliquefaciens subsp. plantarum)).